A 518-amino-acid chain; its full sequence is Protein translocase subunit SecD (518 aa).

A run of 6 helical transmembrane segments spans residues 9 to 29 (IVLSIICTVFAIICALPNFIQ), 356 to 376 (GKKAGLIGFVAVCIFMILSYG), 377 to 397 (VIGLFANIALILALLYILALL), 406 to 426 (LPGIAGIILTIGMAVDANVLI), 463 to 483 (LIVAFALYIFGVGAIKGFAVA), and 486 to 506 (IGIISSMFSAIIITKLLIDVW).

Belongs to the SecD/SecF family. SecD subfamily. Forms a complex with SecF. Part of the essential Sec protein translocation apparatus which comprises SecA, SecYEG and auxiliary proteins SecDF-YajC and YidC.

The protein localises to the cell inner membrane. In terms of biological role, part of the Sec protein translocase complex. Interacts with the SecYEG preprotein conducting channel. SecDF uses the proton motive force (PMF) to complete protein translocation after the ATP-dependent function of SecA. The sequence is that of Protein translocase subunit SecD from Rickettsia prowazekii (strain Madrid E).